The sequence spans 1145 residues: MESLLLPVLLLLAVLWTQAAALINLKYSVEEEQRAGTVIANVAKDAREAGFALDPRQASAFRVVSNSAPHLVDINPSSGLLVTKQKIDRDLLCRQSPKCIISLEVMSSSMEICVIKVEIKDLNDNAPSFPAAQIELEISEAASPGTRIPLDSAYDPDSGSFGVQTYELTPNELFGLEIKTRGDGSRFAELVVEKSLDRETQSHYSFRITALDGGDPPHMGTVGLSIKVTDSNDNNPVFGESTYSVSVPENSPPNTPVIRLNASDPDEGTNGQVVYSFYGYVNDRTRELFQIDPHSGLVTVTGALDYEEGHVYELDVQAKDLGPNSIPAHCKVTVSVLDTNDNPPIINLLSVNSELVEVSESAPPGYVIALVRVSDRDSGLNGRVQCRLLGNVPFRLQEYESFSTILVDGRLDREQHDQYNLTIQARDSGVPMLQSAKSFTVRITDENDNHPHFSKPYYQVIVQENNTPGAYLLSVSARDPDMGLNGSVSYQIVPSQVRDMPVFTYVSINPNSGDIYALRSFNHEQTKAFEFKVLAKDGGLPSLQSNATVRVIILDVNDNTPVITAPPLINGTAEVYIPRNSGIGYLVTVVKADDYDEGENGRVTYDMTEGDRGFFEIDQVNGEVRTTRTFNENSKPSYELIVVAHDHGKTSLSASALVLIYLSPALDAQESMGSVNLSLIFIIALGSIAGILFVTMIFVAIKCKRDNKEIRTYNCSNCLTITCLLGCFIKGQNSKCLHCISVSPNSEEQDKKAEEKVSLRGKRIAEYSYGHQKKSSKKKKISKNDIRLVPRDVEETDKMNVVSCSSLTSSLNYFDYHQQTLPLGCRRSESTFLNVENQNTRNTTASHIYHHSFNSQGPQQPDLIINGVPLPETENYSFDSNYVNSRAHLIKSSSTFKDLEGNSLKDSGHEESDQTDSEHDVQRSLYCDTAVNDVLNTSVTSMGSQMPDHDQNEGFHCREECRILGHSDRCWMPRNPMPTRSKSPEHVRNIIALSIEATAADVEAYDDCGPTKRTFATFGKDVSSHRAEERPILKGKRTVDVTICSPKVNSAIREAGNGCEAISPVTSPLHLKSPLPTKPSISYTVALAPPAHDLEHHANSGASRPSEAEPRGADNEKVMHEVNPIRKDGRDKESPSVKRLKDIVL.

Residues 1–21 (MESLLLPVLLLLAVLWTQAAA) form the signal peptide. Cadherin domains follow at residues 22-129 (LINL…APSF), 130-238 (PAAQ…NPVF), 239-346 (GEST…PPII), 350-453 (SVNS…HPHF), 454-563 (SKPY…TPVI), and 569-672 (INGT…QESM). The Extracellular segment spans residues 22–678 (LINLKYSVEE…QESMGSVNLS (657 aa)). Residues E31, E32, D88, and D90 each contribute to the Ca(2+) site. Cysteines 93 and 99 form a disulfide. D121, N123, D124, N125, E140, D155, D157, E199, D212, D230, S231, N232, D233, N234, and E249 together coordinate Ca(2+). N-linked (GlcNAc...) asparagine glycosylation occurs at N261. Residues D264, D266, N270, D305, E307, D338, N340, D341, N342, E360, D375, D377, N381, D412, and E414 each contribute to the Ca(2+) site. N420 carries N-linked (GlcNAc...) asparagine glycosylation. D427, D445, E446, N447, D448, N449, E464, D479, D481, N485, N522, E524, and D537 together coordinate Ca(2+). The N-linked (GlcNAc...) asparagine glycan is linked to N485. A glycan (N-linked (GlcNAc...) asparagine) is linked at N546. Ca(2+) is bound by residues D555, V556, N557, D558, and N559. N-linked (GlcNAc...) asparagine glycosylation occurs at N570. Positions 594, 596, 600, and 646 each coordinate Ca(2+). Residue N676 is glycosylated (N-linked (GlcNAc...) asparagine). A helical membrane pass occupies residues 679–699 (LIFIIALGSIAGILFVTMIFV). Over 700–1145 (AIKCKRDNKE…SVKRLKDIVL (446 aa)) the chain is Cytoplasmic. Disordered regions lie at residues 901–921 (GNSL…EHDV) and 1094–1145 (LEHH…DIVL). Composition is skewed to basic and acidic residues over residues 906 to 921 (DSGH…EHDV) and 1106 to 1145 (SEAE…DIVL).

As to quaternary structure, homodimer; antiparallel.

It localises to the cell membrane. Functionally, calcium-dependent cell-adhesion protein. The chain is Protocadherin-19 (Pcdh19) from Mus musculus (Mouse).